Reading from the N-terminus, the 296-residue chain is MSNRLISGSTVALVTPFKEDGSVDYEALRRLVRFHREAGTDIILPCGTTGESPTLTNEEEAEIIRTVRDEAGDSMMVAAGAGTNDTRHAVELSRNAEKAGAQAILSVAPYYNKPSQEGYYQHFRHVAESVSVPIIIYNVPGRTASNVSAETILRLAHDFDNVLAVKEASANFEQIMTLIDERPERFSVMTGEDGLMLPFMALGGDGVISVAANQVPKVVKGLIDAMKAGNLEEARAINRKYRKLFRLNFIDSNPVPVKYALSLMGMVEEAYRLPLVPMSDADKATMKAELEQLGLI.

T49 contributes to the pyruvate binding site. The active-site Proton donor/acceptor is the Y137. K166 acts as the Schiff-base intermediate with substrate in catalysis. Residue I208 participates in pyruvate binding.

Belongs to the DapA family. Homotetramer; dimer of dimers.

The protein localises to the cytoplasm. The catalysed reaction is L-aspartate 4-semialdehyde + pyruvate = (2S,4S)-4-hydroxy-2,3,4,5-tetrahydrodipicolinate + H2O + H(+). Its pathway is amino-acid biosynthesis; L-lysine biosynthesis via DAP pathway; (S)-tetrahydrodipicolinate from L-aspartate: step 3/4. Functionally, catalyzes the condensation of (S)-aspartate-beta-semialdehyde [(S)-ASA] and pyruvate to 4-hydroxy-tetrahydrodipicolinate (HTPA). This is 4-hydroxy-tetrahydrodipicolinate synthase from Chlorobaculum parvum (strain DSM 263 / NCIMB 8327) (Chlorobium vibrioforme subsp. thiosulfatophilum).